Here is a 341-residue protein sequence, read N- to C-terminus: Glyceraldehyde-3-phosphate dehydrogenase 2 (341 aa).

NAD(+)-binding positions include 13–14, Asp35, and Lys85; that span reads RI. D-glyceraldehyde 3-phosphate is bound by residues 157-159, Thr188, 217-218, and Arg240; these read SCT and TG. The Nucleophile role is filled by Cys158. Asn322 serves as a coordination point for NAD(+).

The protein belongs to the glyceraldehyde-3-phosphate dehydrogenase family. In terms of assembly, homotetramer.

It localises to the cytoplasm. It carries out the reaction D-glyceraldehyde 3-phosphate + phosphate + NAD(+) = (2R)-3-phospho-glyceroyl phosphate + NADH + H(+). It participates in carbohydrate degradation; glycolysis; pyruvate from D-glyceraldehyde 3-phosphate: step 1/5. This chain is Glyceraldehyde-3-phosphate dehydrogenase 2, found in Caenorhabditis briggsae.